The chain runs to 811 residues: DNA mismatch repair protein MutS (811 aa).

An ATP-binding site is contributed by 595-602 (GPNMSGKS).

The protein belongs to the DNA mismatch repair MutS family.

Functionally, this protein is involved in the repair of mismatches in DNA. It is possible that it carries out the mismatch recognition step. This protein has a weak ATPase activity. The sequence is that of DNA mismatch repair protein MutS from Pseudothermotoga lettingae (strain ATCC BAA-301 / DSM 14385 / NBRC 107922 / TMO) (Thermotoga lettingae).